The primary structure comprises 442 residues: Protein bangles and beads (442 aa).

The segment at 47–442 (AVEPAPLKPE…SEESSESKEN (396 aa)) is disordered. 3 stretches are compositionally biased toward basic and acidic residues: residues 55-67 (PEAE…KTIE), 114-125 (PEKKTLPEEAKP), and 133-146 (EAEK…RTEA). Residues 159-172 (AIEQAPEAPAANAE) are compositionally biased toward low complexity. Composition is skewed to basic and acidic residues over residues 177 to 194 (VVDE…KSAE) and 204 to 240 (AEKE…EPAK). Low complexity-rich tracts occupy residues 241 to 255 (AAEA…AATK) and 272 to 288 (SSPA…AAQA). Basic and acidic residues predominate over residues 329 to 339 (EAVKEQEKEQP). Over residues 357-376 (TAAPAGAPEPTAAVAPAAVP) the composition is skewed to low complexity. A compositionally biased stretch (basic and acidic residues) spans 408–442 (EPKKSSEEKSDKSESKVDESSESKESEESSESKEN). 4 positions are modified to phosphoserine: S430, S433, S436, and S437.

Expressed in the embryonic CNS, in sets of cells that are segmentally reiterated along the periphery of the nervous system.

Functionally, may play an important role during development. This Drosophila melanogaster (Fruit fly) protein is Protein bangles and beads (bnb).